We begin with the raw amino-acid sequence, 249 residues long: Type III pantothenate kinase (249 aa).

6 to 13 (DIGNSRTK) provides a ligand contact to ATP. Substrate contacts are provided by residues Tyr89 and 96–99 (GIDR). Asp98 acts as the Proton acceptor in catalysis. K(+) is bound at residue Asp119. Thr122 serves as a coordination point for ATP. A substrate-binding site is contributed by Thr174.

Belongs to the type III pantothenate kinase family. As to quaternary structure, homodimer. The cofactor is NH4(+). Requires K(+) as cofactor.

It localises to the cytoplasm. The enzyme catalyses (R)-pantothenate + ATP = (R)-4'-phosphopantothenate + ADP + H(+). It functions in the pathway cofactor biosynthesis; coenzyme A biosynthesis; CoA from (R)-pantothenate: step 1/5. Catalyzes the phosphorylation of pantothenate (Pan), the first step in CoA biosynthesis. The protein is Type III pantothenate kinase of Colwellia psychrerythraea (strain 34H / ATCC BAA-681) (Vibrio psychroerythus).